The chain runs to 247 residues: Lysosomal membrane ascorbate-dependent ferrireductase CYB561A3 (247 aa).

The Cytoplasmic segment spans residues 1 to 3; sequence MRG. Residues 4–24 form a helical membrane-spanning segment; it reads IVGFYITYLLCLILGIACVVL. A Cytochrome b561 domain is found at 13–223; it reads LCLILGIACV…FGLVVLKILS (211 aa). Residues 25–46 are Lumenal-facing; the sequence is VVHWNFMYRDGFAWDGSSKNFN. A helical transmembrane segment spans residues 47 to 67; the sequence is WHPVLMVTGMLVLYGNAAVVY. The heme b site is built by histidine 48 and arginine 68. The Cytoplasmic portion of the chain corresponds to 68 to 82; that stretch reads RIPLTWGHNKLPWKL. 2 residues coordinate L-ascorbate: lysine 77 and lysine 81. The chain crosses the membrane as a helical span at residues 83-103; it reads LHAGLLLLSFIFSVIGLCAVF. Residues histidine 84, 113–116, and histidine 118 each bind heme b; that span reads NLYS. Residues 104–120 are Lumenal-facing; that stretch reads NFHNVHHTANLYSLHSW. The helical transmembrane segment at 121–141 threads the bilayer; it reads VGICTAALFTAQWVMGFTSFL. Residues 142–155 are Cytoplasmic-facing; it reads LPCTPMAVRAFVKP. Position 150 (arginine 150) interacts with L-ascorbate. A helical transmembrane segment spans residues 156–176; that stretch reads THVWMGAMILVLSIVSCISGI. Heme b is bound by residues histidine 157 and glutamate 178. Topologically, residues 177 to 201 are lumenal; that stretch reads NEKLFFVLKETTNGTKPYSALPPEA. Residue asparagine 189 is glycosylated (N-linked (GlcNAc...) asparagine). A helical membrane pass occupies residues 202 to 222; sequence VAANSLGVIIVAFGLVVLKIL. Topologically, residues 223 to 247 are cytoplasmic; the sequence is SNQMWQRPEPGDDEGVYRPLAYDGS. Glutamine 228 lines the heme b pocket.

As to quaternary structure, homodimer. The cofactor is heme b.

The protein resides in the late endosome membrane. Its subcellular location is the lysosome membrane. It carries out the reaction Fe(3+)(out) + L-ascorbate(in) = monodehydro-L-ascorbate radical(in) + Fe(2+)(out) + H(+). Transmembrane reductase that uses ascorbate as an electron donor in the cytoplasm and transfers electrons across membranes to reduce iron cations Fe(3+) into Fe(2+) in the lumen of the late endosome and lysosome. Reduced iron can then be extruded from the late endosome and lysosome to the cytoplasm by divalent metal-specific transporters. It is therefore most probably involved in endosomal and lysosomal cellular iron homeostasis. This is Lysosomal membrane ascorbate-dependent ferrireductase CYB561A3 (cyb561a3a) from Danio rerio (Zebrafish).